Reading from the N-terminus, the 205-residue chain is Protein phosphatase inhibitor 2 (205 aa).

Residues 1–44 are disordered; that stretch reads MAASTASHRPIKGILKNKTSTTSSMVASAEQPRGNVDEELSKKS. N-acetylalanine is present on alanine 2. Required for binding PPP1CC stretches follow at residues 12 to 17 and 43 to 55; these read KGILKN and KSQK…ILAT. Positions 17-26 are enriched in polar residues; it reads NKTSTTSSMV. Positions 35–44 are enriched in basic and acidic residues; it reads NVDEELSKKS. A Phosphoserine; by ATM modification is found at serine 44. The residue at position 73 (threonine 73) is a Phosphothreonine; by GSK3. A Phosphoserine modification is found at serine 87. Residues threonine 89 and threonine 92 each carry the phosphothreonine modification. Positions 111–142 are disordered; sequence EPKYRIQEQESSGEEDSDLSPEEREKKRQFEM. A phosphoserine mark is found at serine 121, serine 122, serine 127, and serine 130. Acidic residues predominate over residues 121–130; sequence SSGEEDSDLS. Residues 131-142 show a composition bias toward basic and acidic residues; it reads PEEREKKRQFEM. Residues 147–150 are required for binding PPP1CC catalytic center, displacing metal ions and inhibition of PPP1CC catalytic activity; the sequence is HYNE. Residues 163-205 form a disordered region; it reads KDLHDDDEDEEMLETADGESMNTEESNQGSTPSDQQQNKLRSS. Residues 167 to 179 are compositionally biased toward acidic residues; it reads DDDEDEEMLETAD. A compositionally biased stretch (polar residues) spans 182–205; it reads SMNTEESNQGSTPSDQQQNKLRSS.

It belongs to the protein phosphatase inhibitor 2 family. Heterodimer with PP1. Phosphorylation on Thr-73 by GSK3 activates PP1 by dissociating the PP1-PPP1R2 complex. Phosphorylation on Ser-44 by ATM activates PP1 by dissociating the PP1-PPP1R2 complex.

Inhibitor of protein-phosphatase 1. This Homo sapiens (Human) protein is Protein phosphatase inhibitor 2 (PPP1R2).